The primary structure comprises 454 residues: Probable spastin homolog Bm1_53365 (454 aa).

218–225 is an ATP binding site; sequence GPPGNGKT.

This sequence belongs to the AAA ATPase family. Spastin subfamily. Homohexamer. The homohexamer is stabilized by ATP-binding. The homohexamer may adopt a ring conformation through which microtubules pass prior to being severed. Interacts with microtubules.

It localises to the cytoplasm. The protein resides in the cytoskeleton. Its subcellular location is the perinuclear region. The catalysed reaction is n ATP + n H2O + a microtubule = n ADP + n phosphate + (n+1) alpha/beta tubulin heterodimers.. Its function is as follows. Severs microtubules, probably in an ATP-dependent fashion. The protein is Probable spastin homolog Bm1_53365 of Brugia malayi (Filarial nematode worm).